A 215-amino-acid polypeptide reads, in one-letter code: Ras-related protein Rab-5B (215 aa).

Residues serine 29, alanine 30, glycine 32, lysine 33, serine 34, serine 35, histidine 46, glutamate 47, threonine 52, glycine 78, asparagine 133, lysine 134, aspartate 136, alanine 164, and lysine 165 each coordinate GTP. Serine 34 is a binding site for Mg(2+). 2 consecutive short sequence motifs (switch) follow at residues glutamine 44–alanine 56 and alanine 77–alanine 93. Threonine 52 lines the Mg(2+) pocket. Residues serine 184–asparagine 215 are disordered. The span at glutamine 204 to asparagine 215 shows a compositional bias: polar residues. Residues cysteine 212 and cysteine 213 are each lipidated (S-geranylgeranyl cysteine).

This sequence belongs to the small GTPase superfamily. Rab family. Mg(2+) is required as a cofactor.

The protein resides in the cell membrane. It is found in the early endosome membrane. The enzyme catalyses GTP + H2O = GDP + phosphate + H(+). Its activity is regulated as follows. Regulated by guanine nucleotide exchange factors (GEFs) which promote the exchange of bound GDP for free GTP. Regulated by GTPase activating proteins (GAPs) which increase the GTP hydrolysis activity. Inhibited by GDP dissociation inhibitors (GDIs). Functionally, the small GTPases Rab are key regulators of intracellular membrane trafficking, from the formation of transport vesicles to their fusion with membranes. Rabs cycle between an inactive GDP-bound form and an active GTP-bound form that is able to recruit to membranes different sets of downstream effectors directly responsible for vesicle formation, movement, tethering and fusion. The chain is Ras-related protein Rab-5B (RAB5B) from Gallus gallus (Chicken).